A 256-amino-acid chain; its full sequence is NAD(P)H-hydrate epimerase (256 aa).

The segment covering 1–18 (MADPRRDPAAESKDRPST) has biased composition (basic and acidic residues). The segment at 1 to 21 (MADPRRDPAAESKDRPSTERV) is disordered. Residues 23–229 (AYTADAVRAA…DLGLEPYLRR (207 aa)) form the YjeF N-terminal domain. Residue 74-78 (DNGGD) participates in (6S)-NADPHX binding. 2 residues coordinate K(+): Asn-75 and Asp-135. Residues 139-147 (GIGRLADRR) and Asp-172 each bind (6S)-NADPHX. A K(+)-binding site is contributed by Ser-175.

The protein belongs to the NnrE/AIBP family. K(+) serves as cofactor.

The enzyme catalyses (6R)-NADHX = (6S)-NADHX. It carries out the reaction (6R)-NADPHX = (6S)-NADPHX. Functionally, catalyzes the epimerization of the S- and R-forms of NAD(P)HX, a damaged form of NAD(P)H that is a result of enzymatic or heat-dependent hydration. This is a prerequisite for the S-specific NAD(P)H-hydrate dehydratase to allow the repair of both epimers of NAD(P)HX. The sequence is that of NAD(P)H-hydrate epimerase from Microbacterium testaceum (strain StLB037).